Consider the following 480-residue polypeptide: Acetyl-coenzyme A carboxylase carboxyl transferase subunit beta, chloroplastic (480 aa).

The CoA carboxyltransferase N-terminal domain occupies 212-480 (LWVQCENCYG…FPLNQINKYK (269 aa)). Zn(2+)-binding residues include C216, C219, C235, and C238. The C4-type zinc-finger motif lies at 216–238 (CENCYGLNYQKFFRSKMNICERC).

This sequence belongs to the AccD/PCCB family. As to quaternary structure, acetyl-CoA carboxylase is a heterohexamer composed of biotin carboxyl carrier protein, biotin carboxylase and 2 subunits each of ACCase subunit alpha and ACCase plastid-coded subunit beta (accD). Zn(2+) is required as a cofactor.

It is found in the plastid. The protein resides in the chloroplast stroma. It catalyses the reaction N(6)-carboxybiotinyl-L-lysyl-[protein] + acetyl-CoA = N(6)-biotinyl-L-lysyl-[protein] + malonyl-CoA. The protein operates within lipid metabolism; malonyl-CoA biosynthesis; malonyl-CoA from acetyl-CoA: step 1/1. Functionally, component of the acetyl coenzyme A carboxylase (ACC) complex. Biotin carboxylase (BC) catalyzes the carboxylation of biotin on its carrier protein (BCCP) and then the CO(2) group is transferred by the transcarboxylase to acetyl-CoA to form malonyl-CoA. The polypeptide is Acetyl-coenzyme A carboxylase carboxyl transferase subunit beta, chloroplastic (Illicium oligandrum (Star anise)).